The chain runs to 289 residues: Heterokaryon incompatibility protein s (289 aa).

A globular domain region spans residues 1–227 (MSEPFGIVAG…KIDAIVGRNS (227 aa)). The prion domain (PrD) stretch occupies residues 218 to 289 (KIDAIVGRNS…EYGGKGFWDN (72 aa)).

Homodimer. Forms heterodimers with het-S.

Its subcellular location is the cytoplasm. Functionally, responsible for heterokaryon incompatibility, a process that ensures that during spontaneous, vegetative cell fusion only compatible cells from the same colony survive (non-self-recognition). Forms a prion for the non-Mendelian trait [het-s]. Interacts with het-S from incompatible cells to trigger a lethal reaction that prevents the formation of viable heterokaryons. It is unknown if the native, soluble protein has a cellular function. This is Heterokaryon incompatibility protein s (het-s) from Podospora anserina (Pleurage anserina).